Consider the following 358-residue polypeptide: 1-deoxy-D-xylulose 5-phosphate reductoisomerase (358 aa).

Residues T7, G8, S9, I10, G31, N33, and N114 each contribute to the NADPH site. K115 is a binding site for 1-deoxy-D-xylulose 5-phosphate. Position 116 (E116) interacts with NADPH. Mn(2+) is bound at residue D134. 1-deoxy-D-xylulose 5-phosphate is bound by residues S135, E136, S157, and H180. E136 lines the Mn(2+) pocket. G186 is an NADPH binding site. S193, N198, K199, and E202 together coordinate 1-deoxy-D-xylulose 5-phosphate. Mn(2+) is bound at residue E202.

The protein belongs to the DXR family. Mg(2+) is required as a cofactor. Mn(2+) serves as cofactor.

The enzyme catalyses 2-C-methyl-D-erythritol 4-phosphate + NADP(+) = 1-deoxy-D-xylulose 5-phosphate + NADPH + H(+). It participates in isoprenoid biosynthesis; isopentenyl diphosphate biosynthesis via DXP pathway; isopentenyl diphosphate from 1-deoxy-D-xylulose 5-phosphate: step 1/6. Functionally, catalyzes the NADPH-dependent rearrangement and reduction of 1-deoxy-D-xylulose-5-phosphate (DXP) to 2-C-methyl-D-erythritol 4-phosphate (MEP). This is 1-deoxy-D-xylulose 5-phosphate reductoisomerase from Wolinella succinogenes (strain ATCC 29543 / DSM 1740 / CCUG 13145 / JCM 31913 / LMG 7466 / NCTC 11488 / FDC 602W) (Vibrio succinogenes).